We begin with the raw amino-acid sequence, 151 residues long: Ribosome maturation factor RimP (151 aa).

Belongs to the RimP family.

The protein resides in the cytoplasm. Required for maturation of 30S ribosomal subunits. The sequence is that of Ribosome maturation factor RimP from Mannheimia succiniciproducens (strain KCTC 0769BP / MBEL55E).